Consider the following 357-residue polypeptide: Putative diaminopimelate epimerase, chloroplastic (357 aa).

A chloroplast-targeting transit peptide spans 1-47; that stretch reads MSSATAAATATIAAAAAAAAKLAATPAPAPSRRRLTLRGNPTARRCV. Active-site residues include Cys145 and Cys300.

The protein belongs to the diaminopimelate epimerase family.

Its subcellular location is the plastid. The protein resides in the chloroplast. It carries out the reaction (2S,6S)-2,6-diaminopimelate = meso-2,6-diaminopimelate. It participates in amino-acid biosynthesis; L-lysine biosynthesis via DAP pathway; DL-2,6-diaminopimelate from LL-2,6-diaminopimelate: step 1/1. This chain is Putative diaminopimelate epimerase, chloroplastic (DAPF), found in Oryza sativa subsp. indica (Rice).